Here is a 599-residue protein sequence, read N- to C-terminus: UvrABC system protein C (599 aa).

The region spanning 13–91 (NLPGVYRMIN…IKGFMPRYNV (79 aa)) is the GIY-YIG domain. In terms of domain architecture, UVR spans 200–235 (QQVMDELGEKMNEAAEKMEYELAAVYRDRIQSLRQV).

Belongs to the UvrC family. In terms of assembly, interacts with UvrB in an incision complex.

The protein localises to the cytoplasm. Its function is as follows. The UvrABC repair system catalyzes the recognition and processing of DNA lesions. UvrC both incises the 5' and 3' sides of the lesion. The N-terminal half is responsible for the 3' incision and the C-terminal half is responsible for the 5' incision. The protein is UvrABC system protein C of Methylobacillus flagellatus (strain ATCC 51484 / DSM 6875 / VKM B-1610 / KT).